Here is a 63-residue protein sequence, read N- to C-terminus: Sec-independent protein translocase protein TatA (63 aa).

A helical transmembrane segment spans residues 1-21 (MGSLSMWHWLIVLVIVLLLFG). The disordered stretch occupies residues 43-63 (MTDEDAPETAKTVDHKADETK). Residues 53-63 (KTVDHKADETK) are compositionally biased toward basic and acidic residues.

This sequence belongs to the TatA/E family. As to quaternary structure, the Tat system comprises two distinct complexes: a TatABC complex, containing multiple copies of TatA, TatB and TatC subunits, and a separate TatA complex, containing only TatA subunits. Substrates initially bind to the TatABC complex, which probably triggers association of the separate TatA complex to form the active translocon.

The protein localises to the cell inner membrane. Part of the twin-arginine translocation (Tat) system that transports large folded proteins containing a characteristic twin-arginine motif in their signal peptide across membranes. TatA could form the protein-conducting channel of the Tat system. In Rhizobium etli (strain ATCC 51251 / DSM 11541 / JCM 21823 / NBRC 15573 / CFN 42), this protein is Sec-independent protein translocase protein TatA.